The primary structure comprises 416 residues: Leu/Ile/Val-binding protein homolog 4 (416 aa).

A signal peptide spans 1–26; it reads MSLKVFLQAGVACAALSLAGAAGASA.

Belongs to the leucine-binding protein family.

In terms of biological role, component of an amino-acid transport system. The chain is Leu/Ile/Val-binding protein homolog 4 from Brucella melitensis biotype 1 (strain ATCC 23456 / CCUG 17765 / NCTC 10094 / 16M).